Here is a 97-residue protein sequence, read N- to C-terminus: Protein 9b (97 aa).

Positions Val8–Lys97 constitute a 9b domain.

Belongs to the coronavirus group 2 protein 9b family. As to quaternary structure, homodimer.

It localises to the host cytoplasmic vesicle membrane. The protein localises to the host cytoplasm. The chain is Protein 9b from Rhinolophus sinicus (Chinese rufous horseshoe bat).